A 1044-amino-acid chain; its full sequence is Sarcoplasmic/endoplasmic reticulum calcium ATPase 2 (1044 aa).

Topologically, residues 1-48 are cytoplasmic; sequence MENAHTKTVEEVLGHFGVNESTGLSLEQVKKLKERWGSNELPAEEGKT. S38 carries the phosphoserine modification. A helical transmembrane segment spans residues 49 to 69; the sequence is LLELVIEQFEDLLVRILLLAA. At 70–89 the chain is on the lumenal side; that stretch reads CISFVLAWFEEGEETITAFV. A helical membrane pass occupies residues 90-110; it reads EPFVILLILVANAIVGVWQER. Over 111–253 the chain is Cytoplasmic; that stretch reads NAENAIEALK…QERTPLQQKL (143 aa). Residues 254 to 273 traverse the membrane as a helical segment; the sequence is DEFGEQLSKVISLICIAVWI. Residues 274-295 lie on the Lumenal side of the membrane; sequence INIGHFNDPVHGGSWIRGAIYY. A 3'-nitrotyrosine mark is found at Y294 and Y295. The chain crosses the membrane as a helical span at residues 296 to 313; the sequence is FKIAVALAVAAIPEGLPA. Ca(2+) is bound by residues V304, A305, I307, and E309. At 314–756 the chain is on the cytoplasmic side; it reads VITTCLALGT…EEGRAIYNNM (443 aa). D351 functions as the 4-aspartylphosphate intermediate in the catalytic mechanism. Positions 351 and 353 each coordinate Mg(2+). T353 provides a ligand contact to ATP. T441 carries the phosphothreonine modification. The ATP site is built by E442, R489, and K514. The residue at position 531 (S531) is a Phosphoserine. ATP is bound at residue R559. The tract at residues 575–594 is interaction with HAX1; the sequence is MHLEDSANFIKYETNLTFVG. S580 bears the Phosphoserine mark. Residues T624, G625, and D626 each contribute to the ATP site. A phosphoserine mark is found at S661 and S663. 2 residues coordinate ATP: R677 and K683. Position 702 (D702) interacts with Mg(2+). N705 contributes to the ATP binding site. A helical transmembrane segment spans residues 757–776; the sequence is KQFIRYLISSNVGEVVCIFL. The Ca(2+) site is built by N767 and E770. Topologically, residues 777-786 are lumenal; it reads TAALGFPEAL. Residues 787–807 traverse the membrane as a helical segment; the sequence is IPVQLLWVNLVTDGLPATALG. The segment at 787–807 is interaction with PLN; it reads IPVQLLWVNLVTDGLPATALG. The interval 788 to 1044 is interaction with TMEM64 and PDIA3; it reads PVQLLWVNLV…DTNFSDMFWS (257 aa). Ca(2+) contacts are provided by N795, T798, and D799. Topologically, residues 808 to 827 are cytoplasmic; the sequence is FNPPDLDIMNKPPRNPKEPL. Residues 828–850 traverse the membrane as a helical segment; the sequence is ISGWLFFRYLAIGCYVGAATVGA. Topologically, residues 851–896 are lumenal; that stretch reads AAWWFIAADGGPRVSFYQLSHFLQCKEDNPDFDGVDCAIFESPYPM. The cysteines at positions 875 and 887 are disulfide-linked. The helical transmembrane segment at 897–916 threads the bilayer; that stretch reads TMALSVLVTIEMCNALNSLS. E907 lines the Ca(2+) pocket. At 917–929 the chain is on the cytoplasmic side; that stretch reads ENQSLLRMPPWEN. The helical transmembrane segment at 930–948 threads the bilayer; that stretch reads IWLVGSICLSMSLHFLILY. The interval 931–942 is interaction with PLN; sequence WLVGSICLSMSL. Topologically, residues 949–963 are lumenal; it reads VEPLPLIFQITPLNL. Residues 964-984 traverse the membrane as a helical segment; that stretch reads TQWLMVLKISLPVILMDETLK. At 985-1044 the chain is on the cytoplasmic side; that stretch reads FVARNYLEQPGKECVQPATKSSCSLSACTDGISWPFVLLIMPLVVWVYSTDTNFSDMFWS.

The protein belongs to the cation transport ATPase (P-type) (TC 3.A.3) family. Type IIA subfamily. In terms of assembly, interacts with sarcolipin (SLN); the interaction inhibits ATP2A2 Ca(2+) affinity. Interacts with phospholamban (PLN); the interaction inhibits ATP2A2 Ca(2+) affinity. Interacts with myoregulin (MRLN). Interacts with ARLN and ERLN; the interactions inhibit ATP2A2 Ca(2+) affinity. Interacts with STRIT1/DWORF; the interaction results in activation of ATP2A2. Interacts with the monomeric forms of SLN, PLN, ARLN, ERLN and STRI1/DWORF. Interacts with HAX1. Interacts with S100A8 and S100A9. Interacts with SLC35G1 and STIM1. Interacts with TMEM203. Interacts with TMEM64 and PDIA3. Interacts with TMX1. Interacts with TMX2. Interacts with VMP1; VMP1 competes with PLN and SLN to prevent them from forming an inhibitory complex with ATP2A2. Interacts with ULK1. Interacts with S100A1 in a Ca(2+)-dependent manner. Interacts with TUNAR. Interacts with FLVCR2; this interaction occurs in the absence of heme and promotes ATP2A2 proteasomal degradation; this complex is dissociated upon heme binding. Interacts with FNIP1. Interacts with TRAM2 (via C-terminus). Mg(2+) is required as a cofactor. Nitrated under oxidative stress. Nitration on the two tyrosine residues inhibits catalytic activity. Post-translationally, serotonylated on Gln residues by TGM2 in response to hypoxia, leading to its inactivation. Isoform 2 is highly expressed in heart and slow twitch skeletal muscle. Isoform 2 is widely expressed.

The protein resides in the endoplasmic reticulum membrane. It localises to the sarcoplasmic reticulum membrane. It carries out the reaction Ca(2+)(in) + ATP + H2O = Ca(2+)(out) + ADP + phosphate + H(+). With respect to regulation, has different conformational states with differential Ca2+ affinity. The E1 conformational state (active form) shows high Ca(2+) affinity, while the E2 state exhibits low Ca(2+) affinity. Binding of ATP allosterically increases its affinity for subsequent binding of Ca2+. Reversibly inhibited by phospholamban (PLN) at low calcium concentrations. PLN inhibits ATP2A2 Ca(2+) affinity by disrupting its allosteric activation by ATP. Inhibited by sarcolipin (SLN) and myoregulin (MRLN). The inhibition is blocked by VMP1. Enhanced by STRIT1/DWORF; STRIT1 increases activity by displacing sarcolipin (SLN), phospholamban (PLN) and myoregulin (MRLN). Stabilizes SERCA2 in its E2 state. This magnesium-dependent enzyme catalyzes the hydrolysis of ATP coupled with the translocation of calcium from the cytosol to the sarcoplasmic reticulum lumen. Involved in autophagy in response to starvation. Upon interaction with VMP1 and activation, controls ER-isolation membrane contacts for autophagosome formation. Also modulates ER contacts with lipid droplets, mitochondria and endosomes. In coordination with FLVCR2 mediates heme-stimulated switching from mitochondrial ATP synthesis to thermogenesis. Functionally, involved in the regulation of the contraction/relaxation cycle. Acts as a regulator of TNFSF11-mediated Ca(2+) signaling pathways via its interaction with TMEM64 which is critical for the TNFSF11-induced CREB1 activation and mitochondrial ROS generation necessary for proper osteoclast generation. Association between TMEM64 and SERCA2 in the ER leads to cytosolic Ca(2+) spiking for activation of NFATC1 and production of mitochondrial ROS, thereby triggering Ca(2+) signaling cascades that promote osteoclast differentiation and activation. This is Sarcoplasmic/endoplasmic reticulum calcium ATPase 2 from Mus musculus (Mouse).